Consider the following 414-residue polypeptide: 3-oxoacyl-[acyl-carrier-protein] synthase 2 (414 aa).

Residues 3-413 (KRRVVVTGMG…GTNGSLIFKR (411 aa)) form the Ketosynthase family 3 (KS3) domain. Residues Cys-164, His-304, and His-342 each act as for beta-ketoacyl synthase activity in the active site.

It belongs to the thiolase-like superfamily. Beta-ketoacyl-ACP synthases family. As to quaternary structure, homodimer.

The enzyme catalyses a fatty acyl-[ACP] + malonyl-[ACP] + H(+) = a 3-oxoacyl-[ACP] + holo-[ACP] + CO2. It carries out the reaction (9Z)-hexadecenoyl-[ACP] + malonyl-[ACP] + H(+) = 3-oxo-(11Z)-octadecenoyl-[ACP] + holo-[ACP] + CO2. The protein operates within lipid metabolism; fatty acid biosynthesis. Its function is as follows. Involved in the type II fatty acid elongation cycle. Catalyzes the elongation of a wide range of acyl-ACP by the addition of two carbons from malonyl-ACP to an acyl acceptor. Can efficiently catalyze the conversion of palmitoleoyl-ACP (cis-hexadec-9-enoyl-ACP) to cis-vaccenoyl-ACP (cis-octadec-11-enoyl-ACP), an essential step in the thermal regulation of fatty acid composition. This is 3-oxoacyl-[acyl-carrier-protein] synthase 2 (fabF) from Vibrio cholerae serotype O1 (strain ATCC 39315 / El Tor Inaba N16961).